The following is a 191-amino-acid chain: Fe/S biogenesis protein NfuA (191 aa).

2 residues coordinate [4Fe-4S] cluster: cysteine 149 and cysteine 152.

It belongs to the NfuA family. In terms of assembly, homodimer. [4Fe-4S] cluster serves as cofactor.

In terms of biological role, involved in iron-sulfur cluster biogenesis. Binds a 4Fe-4S cluster, can transfer this cluster to apoproteins, and thereby intervenes in the maturation of Fe/S proteins. Could also act as a scaffold/chaperone for damaged Fe/S proteins. The polypeptide is Fe/S biogenesis protein NfuA (Enterobacter sp. (strain 638)).